We begin with the raw amino-acid sequence, 190 residues long: NADH-quinone oxidoreductase subunit B (190 aa).

Residues cysteine 69, cysteine 70, cysteine 134, and cysteine 164 each contribute to the [4Fe-4S] cluster site.

The protein belongs to the complex I 20 kDa subunit family. In terms of assembly, NDH-1 is composed of 14 different subunits. Subunits NuoB, C, D, E, F, and G constitute the peripheral sector of the complex. [4Fe-4S] cluster serves as cofactor.

It localises to the cell inner membrane. The enzyme catalyses a quinone + NADH + 5 H(+)(in) = a quinol + NAD(+) + 4 H(+)(out). Functionally, NDH-1 shuttles electrons from NADH, via FMN and iron-sulfur (Fe-S) centers, to quinones in the respiratory chain. Couples the redox reaction to proton translocation (for every two electrons transferred, four hydrogen ions are translocated across the cytoplasmic membrane), and thus conserves the redox energy in a proton gradient. In Hyphomonas neptunium (strain ATCC 15444), this protein is NADH-quinone oxidoreductase subunit B.